We begin with the raw amino-acid sequence, 343 residues long: N-acetyl-gamma-glutamyl-phosphate reductase (343 aa).

C147 is a catalytic residue.

This sequence belongs to the NAGSA dehydrogenase family. Type 1 subfamily.

It is found in the cytoplasm. It catalyses the reaction N-acetyl-L-glutamate 5-semialdehyde + phosphate + NADP(+) = N-acetyl-L-glutamyl 5-phosphate + NADPH + H(+). The protein operates within amino-acid biosynthesis; L-arginine biosynthesis; N(2)-acetyl-L-ornithine from L-glutamate: step 3/4. Functionally, catalyzes the NADPH-dependent reduction of N-acetyl-5-glutamyl phosphate to yield N-acetyl-L-glutamate 5-semialdehyde. The protein is N-acetyl-gamma-glutamyl-phosphate reductase of Staphylococcus aureus (strain MRSA252).